We begin with the raw amino-acid sequence, 407 residues long: Phosphopentomutase (407 aa).

Residues Asp-10, Asp-306, His-311, Asp-347, His-348, and His-359 each contribute to the Mn(2+) site.

This sequence belongs to the phosphopentomutase family. It depends on Mn(2+) as a cofactor.

It localises to the cytoplasm. It carries out the reaction 2-deoxy-alpha-D-ribose 1-phosphate = 2-deoxy-D-ribose 5-phosphate. The catalysed reaction is alpha-D-ribose 1-phosphate = D-ribose 5-phosphate. The protein operates within carbohydrate degradation; 2-deoxy-D-ribose 1-phosphate degradation; D-glyceraldehyde 3-phosphate and acetaldehyde from 2-deoxy-alpha-D-ribose 1-phosphate: step 1/2. Its function is as follows. Isomerase that catalyzes the conversion of deoxy-ribose 1-phosphate (dRib-1-P) and ribose 1-phosphate (Rib-1-P) to deoxy-ribose 5-phosphate (dRib-5-P) and ribose 5-phosphate (Rib-5-P), respectively. The sequence is that of Phosphopentomutase from Yersinia pestis bv. Antiqua (strain Angola).